Here is a 1708-residue protein sequence, read N- to C-terminus: Chromatin-remodeling ATPase INO80 (1708 aa).

4 disordered regions span residues 1-312 (MTGA…RKTL), 408-581 (EIQD…SAFE), 626-648 (ASKQ…QARA), and 718-747 (AGAD…IDLP). 2 stretches are compositionally biased toward polar residues: residues 24–37 (PNKN…NDQY) and 88–102 (SSQY…TPQF). 2 stretches are compositionally biased toward low complexity: residues 108–122 (YSAS…SSYN) and 211–220 (ALPGPATTIT). Composition is skewed to basic and acidic residues over residues 265 to 285 (RLEK…EPKS), 408 to 417 (EIQDEKERKK), and 426 to 463 (ENTV…ERAQ). A coiled-coil region spans residues 395 to 478 (ANEASVIAEV…TKRALEGVTS (84 aa)). Positions 507–522 (PSRRKSGRSGTSRPKK) are enriched in basic residues. 3 stretches are compositionally biased toward basic and acidic residues: residues 523–534 (SKEQKQAEKDAA), 551–571 (PKED…RSKE), and 632–646 (KWQE…DTQA). The region spanning 592 to 717 (IWRDIARKDI…SHFIGRKIKG (126 aa)) is the DBINO domain. The stretch at 634 to 706 (QERTNKSMKD…LNFLISQTEL (73 aa)) forms a coiled coil. One can recognise a Helicase ATP-binding domain in the interval 845–1017 (VNLYEQGING…WALLHFIMPT (173 aa)). 858 to 865 (DEMGLGKT) provides a ligand contact to ATP. A DEAQ box motif is present at residues 968–971 (DEAQ). Positions 1422 to 1582 (KLDELLRELK…GVDFNTRNRE (161 aa)) constitute a Helicase C-terminal domain. Residues 1643-1708 (GNFDDISAKP…LIDGDGGLES (66 aa)) are disordered. Polar residues predominate over residues 1658–1672 (PVSTADNFGTPSSTP). Positions 1675–1691 (KRGRGRGNGKGSSKRAK) are enriched in basic residues. Residues 1692 to 1701 (TTTERLRLID) are compositionally biased toward basic and acidic residues.

Belongs to the SNF2/RAD54 helicase family. As to quaternary structure, component of the INO80 chromatin-remodeling complex.

The protein resides in the nucleus. It carries out the reaction ATP + H2O = ADP + phosphate + H(+). ATPase component of the INO80 complex which remodels chromatin by shifting nucleosomes and is involved in DNA repair. In Aspergillus fumigatus (strain ATCC MYA-4609 / CBS 101355 / FGSC A1100 / Af293) (Neosartorya fumigata), this protein is Chromatin-remodeling ATPase INO80 (ino80).